The following is a 526-amino-acid chain: Amine oxidase [flavin-containing] A (526 aa).

Met-1 is subject to N-acetylmethionine. At 1–497 (MTDLEKPSIT…HTFLERNLPS (497 aa)) the chain is on the cytoplasmic side. At Ser-383 the chain carries Phosphoserine. Residue Cys-406 is modified to S-8alpha-FAD cysteine. The helical; Anchor for type IV membrane protein transmembrane segment at 498–518 (VPGLLKITGFSTSVALLCFVL) threads the bilayer. Residues 519 to 526 (YKFKQPQS) are Mitochondrial intermembrane-facing. An interaction with membrane phospholipid headgroups region spans residues 520–522 (KFK).

Belongs to the flavin monoamine oxidase family. As to quaternary structure, monomer, homo- or heterodimer (containing two subunits of similar size). Each subunit contains a covalently bound flavin. Enzymatically active as monomer. The cofactor is FAD.

Its subcellular location is the mitochondrion outer membrane. The enzyme catalyses a secondary aliphatic amine + O2 + H2O = a primary amine + an aldehyde + H2O2. The catalysed reaction is a primary methyl amine + O2 + H2O = an aldehyde + H2O2 + NH4(+). It catalyses the reaction serotonin + O2 + H2O = (5-hydroxyindol-3-yl)acetaldehyde + H2O2 + NH4(+). It carries out the reaction (R)-adrenaline + O2 + H2O = (R)-3,4-dihydroxymandelaldehyde + methylamine + H2O2. The enzyme catalyses dopamine + O2 + H2O = 3,4-dihydroxyphenylacetaldehyde + H2O2 + NH4(+). The catalysed reaction is tyramine + O2 + H2O = (4-hydroxyphenyl)acetaldehyde + H2O2 + NH4(+). It catalyses the reaction (R)-noradrenaline + O2 + H2O = (R)-3,4-dihydroxymandelaldehyde + H2O2 + NH4(+). It carries out the reaction kynuramine + O2 + H2O = 3-(2-aminophenyl)-3-oxopropanal + H2O2 + NH4(+). The enzyme catalyses tryptamine + O2 + H2O = indole-3-acetaldehyde + H2O2 + NH4(+). The catalysed reaction is 2-phenylethylamine + O2 + H2O = 2-phenylacetaldehyde + H2O2 + NH4(+). Its function is as follows. Catalyzes the oxidative deamination of biogenic and xenobiotic amines and has important functions in the metabolism of neuroactive and vasoactive amines in the central nervous system and peripheral tissues. Preferentially oxidizes serotonin. Also catalyzes the oxidative deamination of kynuramine to 3-(2-aminophenyl)-3-oxopropanal that can spontaneously condense to 4-hydroxyquinoline. The protein is Amine oxidase [flavin-containing] A of Mus musculus (Mouse).